A 662-amino-acid chain; its full sequence is Protein transport Sec1b (662 aa).

It belongs to the STXBP/unc-18/SEC1 family.

Functionally, involved in the vesicle trafficking. Binds syntaxins. The protein is Protein transport Sec1b (SEC1B) of Arabidopsis thaliana (Mouse-ear cress).